The primary structure comprises 89 residues: Acylphosphatase (89 aa).

Residues 4–89 (CVRCLIAGRV…IPEIQMFEVR (86 aa)) form the Acylphosphatase-like domain. Residues Arg-19 and Asn-37 contribute to the active site.

The protein belongs to the acylphosphatase family.

It carries out the reaction an acyl phosphate + H2O = a carboxylate + phosphate + H(+). This chain is Acylphosphatase (acyP), found in Nitrosococcus oceani (strain ATCC 19707 / BCRC 17464 / JCM 30415 / NCIMB 11848 / C-107).